We begin with the raw amino-acid sequence, 756 residues long: LIM domain and actin-binding protein 1 (756 aa).

Methionine 1 is modified (N-acetylmethionine). A phosphoserine mark is found at serine 15 and serine 55. Over residues 44–56 (AAEEANMEKRRSN) the composition is skewed to basic and acidic residues. 2 disordered regions span residues 44 to 183 (AAEE…SNKI) and 204 to 377 (QTKI…AVKK). Low complexity predominate over residues 107 to 118 (EVASSSASGVEA). A Phosphoserine modification is found at serine 130. Residues 140–173 (RIKDTEHLKDHSAESKKMENCLAESRHEVGKPET) show a composition bias toward basic and acidic residues. The Required for interaction with NPC1L1 motif lies at 164-166 (SRH). Serine 221 carries the phosphoserine modification. Tyrosine 225 is modified (phosphotyrosine). A phosphoserine mark is found at serine 226 and serine 238. Over residues 245–254 (EKSESRRNLE) the composition is skewed to basic and acidic residues. Residue serine 259 is modified to Phosphoserine. The span at 274-287 (VSKQSSSTNYTNEL) shows a compositional bias: polar residues. Basic and acidic residues predominate over residues 294 to 303 (IKTHKLEQKE). Residues serine 339, serine 346, serine 358, serine 365, and serine 370 each carry the phosphoserine modification. One can recognise an LIM zinc-binding domain in the interval 384–444 (ETCVECQKTV…KPHFNQLFKS (61 aa)). Lysine 435 is modified (N6-succinyllysine). Position 486 is a phosphoserine (serine 486). The required for interaction with MYO5B stretch occupies residues 489 to 509 (VEDAPIAKVGVLTASMEAKAS). Positions 508–726 (ASSQLEKEDK…TTQKQKSQDV (219 aa)) are disordered. Basic and acidic residues predominate over residues 512–523 (LEKEDKPAETKK). Positions 533–542 (ELSSSGSALE) are enriched in low complexity. Positions 552–563 (WPPEDEVSKPEA) are enriched in basic and acidic residues. Serine 597, serine 600, serine 605, and serine 613 each carry phosphoserine. The segment covering 627 to 637 (AERKQMEKASA) has biased composition (basic and acidic residues). A compositionally biased stretch (polar residues) spans 638-651 (SEKNGSVGKTTWPS). Basic and acidic residues predominate over residues 652-667 (KESRGGEAAGRSKEVQ). Positions 691-721 (LQQQSPLEPKSKNWSSFADNTSAKEFTTQKQ) are enriched in polar residues. Phosphoserine is present on residues serine 695, serine 723, and serine 738.

As to quaternary structure, interacts with NPC1L1; bridges NPC1L1 with MYO5B. Interacts with MYO5B; bridges MYO5B with NPC1L1. Interacts with PXN; this complex stabilizes actin dynamics. Interacts with F-actin and G-actin. Interacts with LUZP1 (via C-terminus); both proteins restrict ciliation and may work together to regulate this process. Binds RAB40B (GTP-bound); interaction influences LIMA1 subcellular localization in lamellipodia during cell migration. Phosphorylation of the C-terminal region by MAPK1/MAPK3 reduces its association with F-actin and contributes to actin filament reorganization and enhances cell motility. In terms of processing, ubiquitinated by the ECS(RAB40B) complex leading to its degradation. In terms of tissue distribution, widely expressed. Highest levels of isoform 2 are expressed in lung, spleen and small intestine. Isoform 2 is expressed at higher levels than isoform 1 in most tissues except liver, fat and kidney. Isoform 1 and isoform 2 are expressed at low levels in skeletal muscle, heart, stomach and lymph.

Its subcellular location is the cytoplasm. It localises to the cell junction. It is found in the focal adhesion. The protein localises to the cytoskeleton. The protein resides in the stress fiber. Its subcellular location is the cell membrane. It localises to the cell projection. It is found in the ruffle. The protein localises to the lamellipodium. In terms of biological role, actin-binding protein involved in actin cytoskeleton regulation and dynamics. Increases the number and size of actin stress fibers and inhibits membrane ruffling. Inhibits actin filament depolymerization. Bundles actin filaments, delays filament nucleation and reduces formation of branched filaments. Acts as a negative regulator of primary cilium formation. Plays a role in cholesterol homeostasis. Influences plasma cholesterol levels through regulation of intestinal cholesterol absorption. May act as a scaffold protein by regulating NPC1L1 transportation, an essential protein for cholesterol absorption, to the plasma membrane by recruiting MYO5B to NPC1L1, and thus facilitates cholesterol uptake. In Sus scrofa (Pig), this protein is LIM domain and actin-binding protein 1.